We begin with the raw amino-acid sequence, 173 residues long: MIRIPFRLRPPPGRTLHSLVRTFASTKPADLTGTQEKNTRQKINFHELKHPSKVPQRPHKSTTTVGQSTPTRIPVDAQTVQLLERLSLVDLDSAEAHRTLEDAIEFASQILSVDTEGVEPLYTVLERERLTLREDRVTDGNIQQDVLRNARVTEEEYFVAPPGNIPLEQEPRK.

Residues 1–23 (MIRIPFRLRPPPGRTLHSLVRTF) constitute a mitochondrion transit peptide. Residues 51 to 70 (PSKVPQRPHKSTTTVGQSTP) form a disordered region. The span at 61–70 (STTTVGQSTP) shows a compositional bias: polar residues.

It belongs to the GatC family. Subunit of the heterotrimeric GatCAB amidotransferase (AdT) complex, composed of A, B and C subunits.

Its subcellular location is the mitochondrion. It catalyses the reaction L-glutamyl-tRNA(Gln) + L-glutamine + ATP + H2O = L-glutaminyl-tRNA(Gln) + L-glutamate + ADP + phosphate + H(+). Functionally, allows the formation of correctly charged Gln-tRNA(Gln) through the transamidation of misacylated Glu-tRNA(Gln) in the mitochondria. The reaction takes place in the presence of glutamine and ATP through an activated gamma-phospho-Glu-tRNA(Gln). This Culex quinquefasciatus (Southern house mosquito) protein is Glutamyl-tRNA(Gln) amidotransferase subunit C-1, mitochondrial.